Consider the following 440-residue polypeptide: UDP-N-acetylmuramoylalanine--D-glutamate ligase (440 aa).

An ATP-binding site is contributed by 115–121 (GSNGKST).

It belongs to the MurCDEF family.

The protein localises to the cytoplasm. It catalyses the reaction UDP-N-acetyl-alpha-D-muramoyl-L-alanine + D-glutamate + ATP = UDP-N-acetyl-alpha-D-muramoyl-L-alanyl-D-glutamate + ADP + phosphate + H(+). The protein operates within cell wall biogenesis; peptidoglycan biosynthesis. Cell wall formation. Catalyzes the addition of glutamate to the nucleotide precursor UDP-N-acetylmuramoyl-L-alanine (UMA). The polypeptide is UDP-N-acetylmuramoylalanine--D-glutamate ligase (Aliivibrio fischeri (strain ATCC 700601 / ES114) (Vibrio fischeri)).